The chain runs to 382 residues: F-box/LRR-repeat/kelch-repeat protein At1g09650 (382 aa).

One can recognise an F-box domain in the interval cysteine 7–arginine 52. One copy of the LRR 1 repeat lies at isoleucine 78–glutamate 101. The stretch at proline 180–valine 227 is one Kelch 1 repeat. One copy of the LRR 2 repeat lies at glutamate 239–asparagine 262. The stretch at methionine 270–valine 319 is one Kelch 2 repeat.

This is F-box/LRR-repeat/kelch-repeat protein At1g09650 from Arabidopsis thaliana (Mouse-ear cress).